The chain runs to 38 residues: Trypsin inhibitor DE5 beta chain (38 aa).

This sequence belongs to the protease inhibitor I3 (leguminous Kunitz-type inhibitor) family. In terms of assembly, heterodimer of an alpha and a beta chain linked by a disulfide bond.

Inhibition of trypsin. This chain is Trypsin inhibitor DE5 beta chain, found in Adenanthera pavonina (Sandal bead tree).